Reading from the N-terminus, the 256-residue chain is Pimeloyl-[acyl-carrier protein] methyl ester esterase (256 aa).

One can recognise an AB hydrolase-1 domain in the interval 15-242 (HLVLLHGWGL…AAHAPFISHP (228 aa)). Substrate contacts are provided by residues W22, 82 to 83 (SL), and 143 to 147 (FLALQ). The Nucleophile role is filled by S82. Residues D207 and H235 contribute to the active site. Substrate is bound at residue H235.

This sequence belongs to the AB hydrolase superfamily. Carboxylesterase BioH family. In terms of assembly, monomer.

The protein localises to the cytoplasm. The catalysed reaction is 6-carboxyhexanoyl-[ACP] methyl ester + H2O = 6-carboxyhexanoyl-[ACP] + methanol + H(+). It functions in the pathway cofactor biosynthesis; biotin biosynthesis. Functionally, the physiological role of BioH is to remove the methyl group introduced by BioC when the pimeloyl moiety is complete. It allows to synthesize pimeloyl-ACP via the fatty acid synthetic pathway through the hydrolysis of the ester bonds of pimeloyl-ACP esters. This chain is Pimeloyl-[acyl-carrier protein] methyl ester esterase, found in Escherichia coli O45:K1 (strain S88 / ExPEC).